The chain runs to 87 residues: U3-theraphotoxin-Hhn1b (87 aa).

A signal peptide spans 1–24 (MVNMKASMFLTFAGLVLLFVVCYA). A propeptide spanning residues 25–52 (SESEEKEFPREMLSSIFAVDNDFKQEER) is cleaved from the precursor. 2 disulfides stabilise this stretch: C54–C67 and C61–C72.

Belongs to the neurotoxin 10 (Hwtx-1) family. 51 (Hntx-8) subfamily. Hntx-8 sub-subfamily. As to expression, expressed by the venom gland.

It is found in the secreted. Ion channel inhibitor. The chain is U3-theraphotoxin-Hhn1b from Cyriopagopus hainanus (Chinese bird spider).